The sequence spans 365 residues: Hematopoietic SH2 domain-containing protein homolog (365 aa).

The region spanning 34–125 (WFHGIISRKA…PYNELLTVAC (92 aa)) is the SH2 domain. 2 disordered regions span residues 199 to 278 (QSTD…QQKP) and 335 to 365 (AEHP…APGY). Polar residues predominate over residues 257-277 (QQITPNTPNEGRTQQKNQQQK).

Functionally, may be an adapter protein involved in tyrosine kinase signaling. The sequence is that of Hematopoietic SH2 domain-containing protein homolog (hsh2d) from Danio rerio (Zebrafish).